Consider the following 238-residue polypeptide: IkB-like protein (238 aa).

ANK repeat units lie at residues 48–77 (GSSV…PGEI), 86–115 (DGNS…KNGT), 123–152 (NGMT…DPTQ), and 157–187 (RGFT…PLYM). Residues 80–86 (PHRRDKD) carry the Nuclear localization signal motif. Positions 202–213 (KKKPKIIITGCK) match the Nuclear localization signal motif. The short motif at 205 to 212 (PKIIITGC) is the PxIxITxC motif; Interaction with host PPP3CA element. The FLCV motif motif lies at 227-230 (FLCV).

The protein belongs to the asfivirus A238L family. In terms of assembly, interacts with host PPIA. Interacts with host PPP3CA/Calcineurin. Interacts with host RELA/p65; interaction of the 32 kDa form with host RELA results in the formation of a stable complex with NF-kappa-B. Interacts with host PPP3R1. Interacts with host EP300; this interaction inhibits the association of host EP300 with host RELA, JUN and NFATC2. The protein exists in a 28 kDa and a 32 kDa form, probably due to post-translational modifications which are neither phosphorylation, nor sumoylation.

It is found in the host nucleus. The protein localises to the host cytoplasm. In terms of biological role, I-kappa-B- (IkB)-like protein that inhibits the binding of NF-kappa-B to DNA, thereby down-regulating pro-inflammatory cytokine production. Forms a heterodimer with the NF-kappa-B subunit RELA/p65 and prevents the activation of the NF-kappa-B transcription factor. Also inhibits the host calcineurin phosphatase activity, which is required for the induction of nuclear factor of activated T cells(NFAT)-dependent immune response genes. Inhibits calcineurin function, which is required for the induction of nuclear factor of activated T cells (NFAT)-dependent immune response genes. Prevents the binding of substrates to calcineurin without affecting the phosphatase activity. Does not contain the serine residues that are phosphorylated by host IkB kinase and thus is not degraded following stimulation of the NFkB pathway. The protein is IkB-like protein (A238L) of African swine fever virus (strain Badajoz 1971 Vero-adapted) (Ba71V).